We begin with the raw amino-acid sequence, 382 residues long: D-galactonate dehydratase (382 aa).

Residue Asp-183 coordinates Mg(2+). His-185 (proton donor) is an active-site residue. Mg(2+) is bound by residues Glu-209 and Glu-235. His-285 acts as the Proton acceptor in catalysis.

This sequence belongs to the mandelate racemase/muconate lactonizing enzyme family. GalD subfamily. Mg(2+) is required as a cofactor.

It carries out the reaction D-galactonate = 2-dehydro-3-deoxy-D-galactonate + H2O. It participates in carbohydrate acid metabolism; D-galactonate degradation; D-glyceraldehyde 3-phosphate and pyruvate from D-galactonate: step 1/3. Catalyzes the dehydration of D-galactonate to 2-keto-3-deoxy-D-galactonate. This is D-galactonate dehydratase from Salmonella choleraesuis (strain SC-B67).